The chain runs to 70 residues: Putative defensin-like protein 280 (70 aa).

The signal sequence occupies residues 1–23; that stretch reads MASIKHFFLVFICVSVLLTSGLA. Disulfide bonds link C30–C53, C39–C65, and C43–C67.

Belongs to the DEFL family.

It localises to the secreted. The polypeptide is Putative defensin-like protein 280 (Arabidopsis thaliana (Mouse-ear cress)).